A 670-amino-acid chain; its full sequence is tRNA 5-methylaminomethyl-2-thiouridine biosynthesis bifunctional protein MnmC (670 aa).

Positions 1-245 are tRNA (mnm(5)s(2)U34)-methyltransferase; the sequence is MKPIAIQPAS…KREMLTGALS (245 aa). The tract at residues 271–670 is FAD-dependent cmnm(5)s(2)U34 oxidoreductase; sequence VGGGIASALL…RKLLKGRAAS (400 aa).

The protein in the N-terminal section; belongs to the methyltransferase superfamily. tRNA (mnm(5)s(2)U34)-methyltransferase family. In the C-terminal section; belongs to the DAO family. FAD is required as a cofactor.

It localises to the cytoplasm. It catalyses the reaction 5-aminomethyl-2-thiouridine(34) in tRNA + S-adenosyl-L-methionine = 5-methylaminomethyl-2-thiouridine(34) in tRNA + S-adenosyl-L-homocysteine + H(+). Functionally, catalyzes the last two steps in the biosynthesis of 5-methylaminomethyl-2-thiouridine (mnm(5)s(2)U) at the wobble position (U34) in tRNA. Catalyzes the FAD-dependent demodification of cmnm(5)s(2)U34 to nm(5)s(2)U34, followed by the transfer of a methyl group from S-adenosyl-L-methionine to nm(5)s(2)U34, to form mnm(5)s(2)U34. The chain is tRNA 5-methylaminomethyl-2-thiouridine biosynthesis bifunctional protein MnmC from Cronobacter sakazakii (strain ATCC BAA-894) (Enterobacter sakazakii).